Consider the following 45-residue polypeptide: uncharacterized protein (45 aa).

This is an uncharacterized protein from Haemophilus influenzae (strain ATCC 51907 / DSM 11121 / KW20 / Rd).